The sequence spans 100 residues: MVERLSAEARASALRDLSGWAELDGREAISRTFTFRDFNEAFGFMTRVALIAEKRDHHPEWRNVYRTVEVVLATHDAGGVTMLDIELARAMDAIAAAISG.

The protein belongs to the pterin-4-alpha-carbinolamine dehydratase family.

The catalysed reaction is (4aS,6R)-4a-hydroxy-L-erythro-5,6,7,8-tetrahydrobiopterin = (6R)-L-erythro-6,7-dihydrobiopterin + H2O. The protein is Putative pterin-4-alpha-carbinolamine dehydratase of Bradyrhizobium sp. (strain ORS 278).